The chain runs to 125 residues: Translation initiation factor 5A (125 aa).

The residue at position 36 (Lys36) is a Hypusine.

This sequence belongs to the eIF-5A family.

The protein localises to the cytoplasm. Functionally, functions by promoting the formation of the first peptide bond. This chain is Translation initiation factor 5A (eIF5A), found in Halorubrum lacusprofundi (strain ATCC 49239 / DSM 5036 / JCM 8891 / ACAM 34).